The sequence spans 110 residues: Keratin, type II cytoskeletal 8 (110 aa).

The tract at residues 1–12 (MSTSGPRAFSSR) is head. In terms of domain architecture, IF rod spans 1-110 (MSTSGPRAFS…LDIEIATYRK (110 aa)). Residues S2, S4, S10, and S11 each carry the phosphoserine modification. R12 is subject to Omega-N-methylarginine. Positions 13 to 25 (FASFIDKVRWSLL) are coil 1A. Residues 26–39 (QQQKSNMDNMFESY) are linker 1. Residue K29 forms a Glycyl lysine isopeptide (Lys-Gly) (interchain with G-Cter in SUMO2) linkage. The tract at residues 40–79 (INNLRDVDEAYMNKVELESRLEGLTDEINFLRQIHEEEIR) is coil 1B. K53 is modified (N6-acetyllysine). Residues S80 and S85 each carry the phosphoserine modification. The segment at 80–86 (SLDMDSI) is linker 12. Positions 87-110 (IAEVRHGDDLRRLALDIEIATYRK) are coil 2. Positions 88-99 (AEVRHGDDLRRL) are necessary for interaction with PNN. A Glycyl lysine isopeptide (Lys-Gly) (interchain with G-Cter in SUMO2) cross-link involves residue K110.

Belongs to the intermediate filament family. In terms of assembly, heterotetramer of two type I and two type II keratins. Forms a heterodimer with KRT18. Associates with KRT20. Interacts with PNN. When associated with KRT19, interacts with DMD. Interacts with TCHP. Interacts with APEX1. Interacts with GPER1. Interacts with EPPK1. Interacts with PKP1 and PKP2. Post-translationally, O-glycosylated. O-GlcNAcylation at multiple sites increases solubility, and decreases stability by inducing proteasomal degradation. O-glycosylated (O-GlcNAcylated), in a cell cycle-dependent manner.

It localises to the cytoplasm. The protein resides in the nucleus. The protein localises to the nucleoplasm. Its subcellular location is the nucleus matrix. Functionally, together with KRT19, helps to link the contractile apparatus to dystrophin at the costameres of striated muscle. The chain is Keratin, type II cytoskeletal 8 from Mesocricetus auratus (Golden hamster).